We begin with the raw amino-acid sequence, 824 residues long: MEEKYVPARVEEKWQKLWDSNKSFKAEKVEGKSKYYLLEMFPYPSGRIHMGHVRNYSIGDVIARFKRMKGFNVLHPMGWDAFGMPAENAAIQHKSHPAKWTYENIDYMRGQLKKMGFSYDWDRELATCNVEYYKWEQLIFLQMLEKGLAYKKKSSVNWCPRCETVLANEQVEDGSCWRCDSLVEQKELEQWSFRITDYAEELLEDTYKLPGWPERVLTMQRNWIGRSTGCEIDFSIEGRKDAIKVFTTRQDTLFGATFMSLAPEHPLALQLTTAENMIVVNAFLDKVKKTDKIKRTAEDFEKEGVFTGSYCINPVTNRRMPIYLANFVLTDYGTGAVMAVPTHDQRDFEFARKYAIAMEVVIQPEGGSLDVATMTEAYTAEGIMVNSGRFDGLNSAVAKEQIADFLEQEGLGKKTVNFRLRDWGISRQRYWGNPIPVIYCDDCGAVPVPAKDLPVVLPMDATFTGEGGNPLSKIDSFIKTTCPLCGKDARRETDTMDTFVESSWYFLRYCCPDFACGPLDKGKTEYWMSVDQYIGGIEHAVMHLLYARFFTKVLRDLGYCDINEPFTNLLTQGMVIKDGSKMSKSKGNVVDPNALIEKYGADTARLFSLFAAPPEKDLDWSDQGVDGSYRFLNRVWKLVYECLPLISATGPLDAAALTDEGKTLRRLVHKTIRKVSDDIEDRFHFNTAIAAIMEMVNAIQAFEPKNQPRNVPVLKEAVESVVLLLAPFVPHFAEELWESLGHEDNLNEAAWPAFDAAAAVDEELLVVVQVNGKLRGKVTVAASATDEDIKGAVLADEKIRQLIDGMNIKKIVYVPGKLVNIVVG.

Residues P42–H52 carry the 'HIGH' region motif. The short motif at K581 to S585 is the 'KMSKS' region element. K584 lines the ATP pocket.

It belongs to the class-I aminoacyl-tRNA synthetase family.

The protein localises to the cytoplasm. It catalyses the reaction tRNA(Leu) + L-leucine + ATP = L-leucyl-tRNA(Leu) + AMP + diphosphate. In Geotalea daltonii (strain DSM 22248 / JCM 15807 / FRC-32) (Geobacter daltonii), this protein is Leucine--tRNA ligase.